The primary structure comprises 530 residues: Phosphoenolpyruvate carboxykinase (ATP) (530 aa).

Substrate is bound by residues arginine 59, tyrosine 198, and lysine 204. ATP contacts are provided by residues lysine 204, histidine 223, and 239–247 (GLSGTGKTT). The Mn(2+) site is built by lysine 204 and histidine 223. Aspartate 260 provides a ligand contact to Mn(2+). ATP contacts are provided by residues glutamate 288, arginine 325, 440 to 441 (RI), and threonine 446. Residue arginine 325 participates in substrate binding.

The protein belongs to the phosphoenolpyruvate carboxykinase (ATP) family. Mn(2+) serves as cofactor.

It is found in the cytoplasm. The catalysed reaction is oxaloacetate + ATP = phosphoenolpyruvate + ADP + CO2. Its pathway is carbohydrate biosynthesis; gluconeogenesis. Its function is as follows. Involved in the gluconeogenesis. Catalyzes the conversion of oxaloacetate (OAA) to phosphoenolpyruvate (PEP) through direct phosphoryl transfer between the nucleoside triphosphate and OAA. This is Phosphoenolpyruvate carboxykinase (ATP) from Azobacteroides pseudotrichonymphae genomovar. CFP2.